The chain runs to 618 residues: uncharacterized protein (618 aa).

The N-terminal stretch at 1–29 (MSFLVLPPEVNSALMFAGAGSGPTLAAAA) is a signal peptide. Residues 598 to 618 (SGDNSSGGFNAGNDQSGFFDG) form a disordered region.

The protein belongs to the mycobacterial PPE family.

This is an uncharacterized protein from Mycobacterium tuberculosis (strain ATCC 25618 / H37Rv).